Here is a 441-residue protein sequence, read N- to C-terminus: Ribosomal protein uS12 methylthiotransferase RimO (441 aa).

One can recognise an MTTase N-terminal domain in the interval 6–116 (QKVGIVSLGC…VVAAVHEAAP (111 aa)). Positions 15, 51, 80, 147, 151, and 154 each coordinate [4Fe-4S] cluster. In terms of domain architecture, Radical SAM core spans 133–370 (LTPRHYAYLK…MAAQQEISER (238 aa)). The TRAM domain occupies 373–439 (AQKVGTVIEA…EYDLWGSLAG (67 aa)).

The protein belongs to the methylthiotransferase family. RimO subfamily. Requires [4Fe-4S] cluster as cofactor.

Its subcellular location is the cytoplasm. The catalysed reaction is L-aspartate(89)-[ribosomal protein uS12]-hydrogen + (sulfur carrier)-SH + AH2 + 2 S-adenosyl-L-methionine = 3-methylsulfanyl-L-aspartate(89)-[ribosomal protein uS12]-hydrogen + (sulfur carrier)-H + 5'-deoxyadenosine + L-methionine + A + S-adenosyl-L-homocysteine + 2 H(+). Its function is as follows. Catalyzes the methylthiolation of an aspartic acid residue of ribosomal protein uS12. The sequence is that of Ribosomal protein uS12 methylthiotransferase RimO from Rhodospirillum rubrum (strain ATCC 11170 / ATH 1.1.1 / DSM 467 / LMG 4362 / NCIMB 8255 / S1).